The chain runs to 314 residues: Olfactory receptor 5B17 (314 aa).

The Extracellular portion of the chain corresponds to 1 to 23; it reads MENNTEVSEFILLGLTNAPELQV. N-linked (GlcNAc...) asparagine glycosylation is present at Asn3. The chain crosses the membrane as a helical span at residues 24–44; the sequence is PLFIMFTLIYLITLTGNLGMI. The Cytoplasmic segment spans residues 45–52; sequence ILILLDSH. Residues 53–73 traverse the membrane as a helical segment; it reads LHTPMYFFLSNLSLAGIGYSS. At 74-97 the chain is on the extracellular side; that stretch reads AVTPKVLTGLLIEDKAISYSACAA. An intrachain disulfide couples Cys95 to Cys187. The chain crosses the membrane as a helical span at residues 98–118; sequence QMFFCAVFATVENYLLSSMAY. Residues 119-137 lie on the Cytoplasmic side of the membrane; the sequence is DRYAAVCNPLHYTTTMTTR. A helical membrane pass occupies residues 138–158; sequence VCACLAIGCYVIGFLNASIQI. Over 159–194 the chain is Extracellular; the sequence is GDTFRLSFCMSNVIHHFFCDKPAVITLTCSEKHISE. Residues 195-215 form a helical membrane-spanning segment; the sequence is LILVLISSFNVFFALLVTLIS. Residues 216 to 235 are Cytoplasmic-facing; sequence YLFILITILKRHTGKGYQKP. A helical transmembrane segment spans residues 236-256; the sequence is LSTCGSHLIAIFLFYITVIIM. The Extracellular segment spans residues 257–269; it reads YIRPSSSHSMDTD. Residues 270 to 290 traverse the membrane as a helical segment; it reads KIASVFYTMIIPMLSPIVYTL. Residues 291–314 are Cytoplasmic-facing; sequence RNKDVKNAFMKVVEKAKYSLDSVF.

The protein belongs to the G-protein coupled receptor 1 family.

Its subcellular location is the cell membrane. In terms of biological role, odorant receptor. The chain is Olfactory receptor 5B17 (OR5B17) from Homo sapiens (Human).